The chain runs to 205 residues: CASP-like protein 0U1 (205 aa).

Topologically, residues 1 to 66 are cytoplasmic; that stretch reads MSGGDIDPTA…GYHKFAVFQF (66 aa). The MARVEL domain occupies 10 to 162; that stretch reads AINSPKFRLI…SMMFTWKEWR (153 aa). The helical transmembrane segment at 67–87 threads the bilayer; sequence LVVICVTYWLFTMLWMGMYLI. Residues 88-90 lie on the Extracellular side of the membrane; it reads QKV. The helical transmembrane segment at 91 to 111 threads the bilayer; it reads PPAGTEFMIYAVFNVLILIAF. The Cytoplasmic portion of the chain corresponds to 112-137; the sequence is STSWTECNETIVDPTYPVCKRATGAK. A helical membrane pass occupies residues 138–158; that stretch reads ASIAFAMFTWLALCVSMMFTW. Residues 159-167 lie on the Extracellular side of the membrane; the sequence is KEWRDQNYE. Residues 168–188 form a helical membrane-spanning segment; it reads GLPIFGDFSSFMPGGGGGGMG. Topologically, residues 189–205 are cytoplasmic; it reads GGGGYERPSDVNTQTYA.

Belongs to the Casparian strip membrane proteins (CASP) family. Homodimer and heterodimers.

Its subcellular location is the cell membrane. This Micromonas pusilla (strain CCMP1545) (Picoplanktonic green alga) protein is CASP-like protein 0U1.